We begin with the raw amino-acid sequence, 291 residues long: Bis(5'-nucleosyl)-tetraphosphatase, symmetrical (291 aa).

This sequence belongs to the Ap4A hydrolase family.

It carries out the reaction P(1),P(4)-bis(5'-adenosyl) tetraphosphate + H2O = 2 ADP + 2 H(+). In terms of biological role, hydrolyzes diadenosine 5',5'''-P1,P4-tetraphosphate to yield ADP. This is Bis(5'-nucleosyl)-tetraphosphatase, symmetrical from Pseudomonas syringae pv. syringae (strain B728a).